The chain runs to 246 residues: Granzyme H (246 aa).

The signal sequence occupies residues 1–18 (MQPFLLLLAFLLTPGAGT). The propeptide at 19–20 (EE) is activation peptide. Positions 21 to 244 (IIGGHEAKPH…FLPWIKRTMK (224 aa)) constitute a Peptidase S1 domain. Residues 46–48 (RKR) form a mediates the preference for acidic residues at the P3' and P4' sites region. Cys-49 and Cys-65 are oxidised to a cystine. His-64 (charge relay system) is an active-site residue. Residues Asn-71 and Asn-104 are each glycosylated (N-linked (GlcNAc...) asparagine). The Charge relay system role is filled by Asp-108. 2 disulfides stabilise this stretch: Cys-142/Cys-208 and Cys-172/Cys-187. The N-linked (GlcNAc...) asparagine glycan is linked to Asn-179. Residue Ser-202 is the Charge relay system of the active site.

This sequence belongs to the peptidase S1 family. Granzyme subfamily. In terms of tissue distribution, constitutively expressed in NK cells.

It localises to the cytolytic granule. Its activity is regulated as follows. Inhibited by SERPINB1. In terms of biological role, cytotoxic chymotrypsin-like serine protease with preference for bulky and aromatic residues at the P1 position and acidic residues at the P3' and P4' sites. Probably necessary for target cell lysis in cell-mediated immune responses. Participates in the antiviral response via direct cleavage of several proteins essential for viral replication. This chain is Granzyme H (GZMH), found in Homo sapiens (Human).